We begin with the raw amino-acid sequence, 370 residues long: 3-dehydroquinate synthase (370 aa).

NAD(+)-binding positions include 107 to 111, 131 to 132, K144, and K153; these read GVIGD and TS. Positions 186, 249, and 267 each coordinate Zn(2+).

Belongs to the sugar phosphate cyclases superfamily. Dehydroquinate synthase family. Co(2+) serves as cofactor. Requires Zn(2+) as cofactor. NAD(+) is required as a cofactor.

Its subcellular location is the cytoplasm. The enzyme catalyses 7-phospho-2-dehydro-3-deoxy-D-arabino-heptonate = 3-dehydroquinate + phosphate. Its pathway is metabolic intermediate biosynthesis; chorismate biosynthesis; chorismate from D-erythrose 4-phosphate and phosphoenolpyruvate: step 2/7. Functionally, catalyzes the conversion of 3-deoxy-D-arabino-heptulosonate 7-phosphate (DAHP) to dehydroquinate (DHQ). This Roseobacter denitrificans (strain ATCC 33942 / OCh 114) (Erythrobacter sp. (strain OCh 114)) protein is 3-dehydroquinate synthase.